The chain runs to 192 residues: Adenylate kinase (192 aa).

12-17 (GSGKTT) contacts ATP. Positions 34-63 (STGDLLRAEVASGSELGQTIKSYIDNGNLV) are NMP. Residues T35, R40, 61-63 (NLV), 88-91 (GFPR), and Q95 contribute to the AMP site. Residues 130 to 136 (GRARGAD) are LID. R131 lines the ATP pocket. Residues R133 and R145 each coordinate AMP. R173 lines the ATP pocket.

The protein belongs to the adenylate kinase family. As to quaternary structure, monomer.

The protein resides in the cytoplasm. The enzyme catalyses AMP + ATP = 2 ADP. Its pathway is purine metabolism; AMP biosynthesis via salvage pathway; AMP from ADP: step 1/1. Catalyzes the reversible transfer of the terminal phosphate group between ATP and AMP. Plays an important role in cellular energy homeostasis and in adenine nucleotide metabolism. The sequence is that of Adenylate kinase from Nautilia profundicola (strain ATCC BAA-1463 / DSM 18972 / AmH).